A 663-amino-acid chain; its full sequence is Putative glucosamine-6-phosphate deaminase-like protein BT_0258 (663 aa).

The tract at residues 1–290 (MKTNLSSQIT…NLTRIQRPWL (290 aa)) is glucosamine-6-phosphate deaminase-like. Residue glutamate 184 is part of the active site.

It in the N-terminal section; belongs to the glucosamine/galactosamine-6-phosphate isomerase family. NagB subfamily.

This chain is Putative glucosamine-6-phosphate deaminase-like protein BT_0258, found in Bacteroides thetaiotaomicron (strain ATCC 29148 / DSM 2079 / JCM 5827 / CCUG 10774 / NCTC 10582 / VPI-5482 / E50).